A 145-amino-acid polypeptide reads, in one-letter code: UPF0310 protein Mvan_0064 (145 aa).

Belongs to the UPF0310 family.

In Mycolicibacterium vanbaalenii (strain DSM 7251 / JCM 13017 / BCRC 16820 / KCTC 9966 / NRRL B-24157 / PYR-1) (Mycobacterium vanbaalenii), this protein is UPF0310 protein Mvan_0064.